The chain runs to 283 residues: Bifunctional protein FolD (283 aa).

Residues 163–165, serine 188, and isoleucine 229 each bind NADP(+); that span reads GRS.

This sequence belongs to the tetrahydrofolate dehydrogenase/cyclohydrolase family. In terms of assembly, homodimer.

It carries out the reaction (6R)-5,10-methylene-5,6,7,8-tetrahydrofolate + NADP(+) = (6R)-5,10-methenyltetrahydrofolate + NADPH. It catalyses the reaction (6R)-5,10-methenyltetrahydrofolate + H2O = (6R)-10-formyltetrahydrofolate + H(+). The protein operates within one-carbon metabolism; tetrahydrofolate interconversion. Its function is as follows. Catalyzes the oxidation of 5,10-methylenetetrahydrofolate to 5,10-methenyltetrahydrofolate and then the hydrolysis of 5,10-methenyltetrahydrofolate to 10-formyltetrahydrofolate. This Campylobacter fetus subsp. fetus (strain 82-40) protein is Bifunctional protein FolD.